The primary structure comprises 182 residues: Ribosome-recycling factor (182 aa).

The protein belongs to the RRF family.

Its subcellular location is the cytoplasm. Functionally, responsible for the release of ribosomes from messenger RNA at the termination of protein biosynthesis. May increase the efficiency of translation by recycling ribosomes from one round of translation to another. The polypeptide is Ribosome-recycling factor (Prochlorococcus marinus (strain MIT 9515)).